We begin with the raw amino-acid sequence, 207 residues long: Dephospho-CoA kinase (207 aa).

A DPCK domain is found at V4–Y203. A12–T17 contributes to the ATP binding site.

Belongs to the CoaE family.

It localises to the cytoplasm. The catalysed reaction is 3'-dephospho-CoA + ATP = ADP + CoA + H(+). The protein operates within cofactor biosynthesis; coenzyme A biosynthesis; CoA from (R)-pantothenate: step 5/5. Functionally, catalyzes the phosphorylation of the 3'-hydroxyl group of dephosphocoenzyme A to form coenzyme A. The protein is Dephospho-CoA kinase of Staphylococcus aureus (strain USA300).